Reading from the N-terminus, the 232-residue chain is MGKSQYVTGIKKMPINERPREKLLNYGPESLSNPELLAIILSTGTKEMSAIDLATHVLSYSEEGLRHLKNCEIEELQQIKGVGIAKASQILAAVELGKRISLTSRVNHYRIKSPDDVSNLLMEEMRYLKKEYFNIALLNTKHEVIAIENISIGSLNASIVHPREVFVVAIKRSSSAIILVHNHPSGDPSPSGEDIRITKRLVEAGKLLGIEVLDHIIIGDNVYYSLKEKSMM.

Residues 110–232 (RIKSPDDVSN…YYSLKEKSMM (123 aa)) enclose the MPN domain. Residues H181, H183, and D194 each contribute to the Zn(2+) site. The JAMM motif signature appears at 181–194 (HNHPSGDPSPSGED).

It belongs to the UPF0758 family.

The sequence is that of UPF0758 protein Amet_2289 from Alkaliphilus metalliredigens (strain QYMF).